Consider the following 229-residue polypeptide: PKHD-type hydroxylase BRADO4652 (229 aa).

The region spanning 78–180 (QIFPPLFNRY…RVASFFWMQS (103 aa)) is the Fe2OG dioxygenase domain. Fe cation is bound by residues histidine 98, aspartate 100, and histidine 161. Arginine 171 contacts 2-oxoglutarate.

Fe(2+) serves as cofactor. It depends on L-ascorbate as a cofactor.

The sequence is that of PKHD-type hydroxylase BRADO4652 from Bradyrhizobium sp. (strain ORS 278).